Here is an 842-residue protein sequence, read N- to C-terminus: Xyloglucanase Xgh74A (842 aa).

The signal sequence occupies residues 1–32 (MVKKFTSKIKAAVFAAVVAATAIFGPAISSQA). Asp-70 functions as the Nucleophile in the catalytic mechanism. BNR repeat units lie at residues 134 to 144 (RSTDRGETWEK), 185 to 196 (WRSTDYGVTWSK), 252 to 262 (YRSTDGGVTWK), and 358 to 368 (FRSTDGGATWK). Asp-480 acts as the Proton donor in catalysis. BNR repeat units follow at residues 533–541 (FSYDGGRNW), 577–586 (VTTDNGNSWK), 616–626 (YISTDGGLTFT), 660–671 (WRSTDGGYTFEK), and 708–718 (FRSDDAGKTWV). Positions 771–841 (DKGLVGDLNG…LLQAIPELPK (71 aa)) constitute a Dockerin domain.

The protein belongs to the glycosyl hydrolase 74 family.

Hydrolyzes the glucosidic bonds of unbranched Glc residues in tamarind seed xyloglucan, producing XXXG, XLXG, XXLG and XLLG. Has low activity on carboxymethylcellulose, lichenan,hydroxyethylcellulose and glucuronoxylan, and no activity on xylan, polygalaturonic acid, wheat arabinoxylan, rhamnogalacturan, curdlan, laminarin, galactomannan, galactan, arabinan and pachyman or amorphous cellulose. In Acetivibrio thermocellus (Hungateiclostridium thermocellum), this protein is Xyloglucanase Xgh74A.